The primary structure comprises 1059 residues: Tyrosine-protein kinase-like otk (1059 aa).

The first 23 residues, Met1–Gly23, serve as a signal peptide directing secretion. The Extracellular portion of the chain corresponds to Ser24–Ala597. 5 Ig-like C2-type domains span residues Ser28–Ser112, Pro113–Ser202, Pro258–Asn377, Pro380–Asn475, and Pro480–Thr570. N-linked (GlcNAc...) asparagine glycosylation is present at Asn42. Disulfide bonds link Cys49/Cys99, Cys141/Cys191, Cys283/Cys366, and Cys411/Cys459. Asn348, Asn429, Asn441, Asn456, Asn469, Asn524, and Asn536 each carry an N-linked (GlcNAc...) asparagine glycan. An intrachain disulfide couples Cys502 to Cys554. A helical membrane pass occupies residues Val598–Trp618. The Cytoplasmic portion of the chain corresponds to Cys619–Glu1059. Residues Gly639 to Ser695 are disordered. The span at Gln665 to Arg693 shows a compositional bias: polar residues. Ser698 carries the phosphoserine modification. The Protein kinase; inactive domain maps to Leu712–Met1055. The interval Ala739 to Met781 is disordered. Positions Asn742–Ser753 are enriched in basic and acidic residues.

This sequence belongs to the protein kinase superfamily. Tyr protein kinase family. Insulin receptor subfamily. Interacts with plexA; component of a receptor complex that mediates the repulsive signaling in response to Semaphorin ligands.

It localises to the cell membrane. In terms of biological role, acts as a calcium-dependent, homophilic cell adhesion molecule that regulates neural recognition during the development of the nervous system. Component of the repulsive Plexin signaling response to regulate motor axon guidance at the embryonic stage. Also component of a receptor complex that is required in the adult visual system to innervate the lamina layer; specific targeting of R1-R6 axons. The sequence is that of Tyrosine-protein kinase-like otk from Drosophila willistoni (Fruit fly).